The primary structure comprises 124 residues: Tax1-binding protein 3 (124 aa).

Residue S2 is modified to N-acetylserine. Residues 15–112 form the PDZ domain; that stretch reads RVEIHKLRQG…EVVRLLVTRQ (98 aa). At S61 the chain carries Phosphoserine.

In terms of assembly, interacts (via its PDZ domain) with GLS2. Interacts (via its PDZ domain) with RTKN (via the C-terminal region); this interaction facilitates Rho-mediated activation of the FOS serum response element (SRE). Interacts (via its PDZ domain) with CTNNB1; this interaction inhibits the transcriptional activity of CTNNB1. Interacts with HTLV-1 TAX protein. Interacts (via PDZ domain) with ARHGEF16. Interacts (via PDZ domain) with KCNJ4 (via C-terminus). Competes with LIN7A for KCNJ4 binding. Interacts with ADGRB2. As to expression, ubiquitous. Detected in brain, heart, kidney, lung, small intestine and skeletal muscle. Detected in various cell lines including HeLa. Weakly expressed in peripheral blood leukocytes.

It localises to the cytoplasm. The protein resides in the nucleus. It is found in the cell membrane. May regulate a number of protein-protein interactions by competing for PDZ domain binding sites. Binds CTNNB1 and may thereby act as an inhibitor of the Wnt signaling pathway. Competes with LIN7A for KCNJ4 binding, and thereby promotes KCNJ4 internalization. May play a role in the Rho signaling pathway. May play a role in activation of CDC42 by the viral protein HPV16 E6. This is Tax1-binding protein 3 from Homo sapiens (Human).